Here is a 101-residue protein sequence, read N- to C-terminus: Urease subunit beta (101 aa).

This sequence belongs to the urease beta subunit family. Heterotrimer of UreA (gamma), UreB (beta) and UreC (alpha) subunits. Three heterotrimers associate to form the active enzyme.

It is found in the cytoplasm. The enzyme catalyses urea + 2 H2O + H(+) = hydrogencarbonate + 2 NH4(+). Its pathway is nitrogen metabolism; urea degradation; CO(2) and NH(3) from urea (urease route): step 1/1. The protein is Urease subunit beta of Jannaschia sp. (strain CCS1).